Consider the following 525-residue polypeptide: Glucans biosynthesis protein G (525 aa).

An N-terminal signal peptide occupies residues 1–35; it reads MIFRSVSNTDFRARVRTLLLAGSTALAFVAAPVWA.

Belongs to the OpgD/OpgG family.

It is found in the periplasm. Its pathway is glycan metabolism; osmoregulated periplasmic glucan (OPG) biosynthesis. Its function is as follows. Involved in the biosynthesis of osmoregulated periplasmic glucans (OPGs). This Pseudomonas paraeruginosa (strain DSM 24068 / PA7) (Pseudomonas aeruginosa (strain PA7)) protein is Glucans biosynthesis protein G.